A 418-amino-acid chain; its full sequence is Serine hydroxymethyltransferase (418 aa).

(6S)-5,6,7,8-tetrahydrofolate is bound by residues leucine 121 and 125–127 (GHL). At lysine 230 the chain carries N6-(pyridoxal phosphate)lysine. 356-358 (SPF) is a binding site for (6S)-5,6,7,8-tetrahydrofolate.

This sequence belongs to the SHMT family. In terms of assembly, homodimer. Pyridoxal 5'-phosphate serves as cofactor.

The protein resides in the cytoplasm. The enzyme catalyses (6R)-5,10-methylene-5,6,7,8-tetrahydrofolate + glycine + H2O = (6S)-5,6,7,8-tetrahydrofolate + L-serine. It functions in the pathway one-carbon metabolism; tetrahydrofolate interconversion. Its pathway is amino-acid biosynthesis; glycine biosynthesis; glycine from L-serine: step 1/1. In terms of biological role, catalyzes the reversible interconversion of serine and glycine with tetrahydrofolate (THF) serving as the one-carbon carrier. This reaction serves as the major source of one-carbon groups required for the biosynthesis of purines, thymidylate, methionine, and other important biomolecules. Also exhibits THF-independent aldolase activity toward beta-hydroxyamino acids, producing glycine and aldehydes, via a retro-aldol mechanism. In Shewanella woodyi (strain ATCC 51908 / MS32), this protein is Serine hydroxymethyltransferase.